The following is a 467-amino-acid chain: 5-phosphohydroxy-L-lysine phospho-lyase (467 aa).

Residue Lys278 is modified to N6-(pyridoxal phosphate)lysine.

It belongs to the class-III pyridoxal-phosphate-dependent aminotransferase family. In terms of assembly, homotetramer. Requires pyridoxal 5'-phosphate as cofactor.

It localises to the mitochondrion. The catalysed reaction is (5R)-5-phosphooxy-L-lysine + H2O = (S)-2-amino-6-oxohexanoate + NH4(+) + phosphate. Its function is as follows. Catalyzes the pyridoxal-phosphate-dependent breakdown of 5-phosphohydroxy-L-lysine, converting it to ammonia, inorganic phosphate and 2-aminoadipate semialdehyde. This chain is 5-phosphohydroxy-L-lysine phospho-lyase (Phykpl), found in Mus musculus (Mouse).